The sequence spans 374 residues: Queuine tRNA-ribosyltransferase (374 aa).

D92 (proton acceptor) is an active-site residue. Residues 92–96 (DSGGY), D146, Q193, and G220 contribute to the substrate site. An RNA binding region spans residues 251–257 (GVGKPDD). D270 serves as the catalytic Nucleophile. An RNA binding; important for wobble base 34 recognition region spans residues 275-279 (TRSGR). Zn(2+) is bound by residues C308, C310, C313, and H339.

Belongs to the queuine tRNA-ribosyltransferase family. Homodimer. Within each dimer, one monomer is responsible for RNA recognition and catalysis, while the other monomer binds to the replacement base PreQ1. It depends on Zn(2+) as a cofactor.

The catalysed reaction is 7-aminomethyl-7-carbaguanine + guanosine(34) in tRNA = 7-aminomethyl-7-carbaguanosine(34) in tRNA + guanine. It functions in the pathway tRNA modification; tRNA-queuosine biosynthesis. In terms of biological role, catalyzes the base-exchange of a guanine (G) residue with the queuine precursor 7-aminomethyl-7-deazaguanine (PreQ1) at position 34 (anticodon wobble position) in tRNAs with GU(N) anticodons (tRNA-Asp, -Asn, -His and -Tyr). Catalysis occurs through a double-displacement mechanism. The nucleophile active site attacks the C1' of nucleotide 34 to detach the guanine base from the RNA, forming a covalent enzyme-RNA intermediate. The proton acceptor active site deprotonates the incoming PreQ1, allowing a nucleophilic attack on the C1' of the ribose to form the product. After dissociation, two additional enzymatic reactions on the tRNA convert PreQ1 to queuine (Q), resulting in the hypermodified nucleoside queuosine (7-(((4,5-cis-dihydroxy-2-cyclopenten-1-yl)amino)methyl)-7-deazaguanosine). The polypeptide is Queuine tRNA-ribosyltransferase (Novosphingobium aromaticivorans (strain ATCC 700278 / DSM 12444 / CCUG 56034 / CIP 105152 / NBRC 16084 / F199)).